The sequence spans 203 residues: Histidine biosynthesis bifunctional protein HisIE (203 aa).

The phosphoribosyl-AMP cyclohydrolase stretch occupies residues methionine 1 to phenylalanine 114. The phosphoribosyl-ATP pyrophosphohydrolase stretch occupies residues leucine 115 to glutamine 203.

This sequence in the N-terminal section; belongs to the PRA-CH family. The protein in the C-terminal section; belongs to the PRA-PH family.

It is found in the cytoplasm. The catalysed reaction is 1-(5-phospho-beta-D-ribosyl)-ATP + H2O = 1-(5-phospho-beta-D-ribosyl)-5'-AMP + diphosphate + H(+). It carries out the reaction 1-(5-phospho-beta-D-ribosyl)-5'-AMP + H2O = 1-(5-phospho-beta-D-ribosyl)-5-[(5-phospho-beta-D-ribosylamino)methylideneamino]imidazole-4-carboxamide. The protein operates within amino-acid biosynthesis; L-histidine biosynthesis; L-histidine from 5-phospho-alpha-D-ribose 1-diphosphate: step 2/9. It functions in the pathway amino-acid biosynthesis; L-histidine biosynthesis; L-histidine from 5-phospho-alpha-D-ribose 1-diphosphate: step 3/9. The polypeptide is Histidine biosynthesis bifunctional protein HisIE (Shigella sonnei (strain Ss046)).